We begin with the raw amino-acid sequence, 260 residues long: Hydroxyethylthiazole kinase 1 (260 aa).

Met-39 provides a ligand contact to substrate. Residues Arg-115 and Thr-160 each coordinate ATP. Position 187 (Gly-187) interacts with substrate.

It belongs to the Thz kinase family. Mg(2+) serves as cofactor.

It carries out the reaction 5-(2-hydroxyethyl)-4-methylthiazole + ATP = 4-methyl-5-(2-phosphooxyethyl)-thiazole + ADP + H(+). Its pathway is cofactor biosynthesis; thiamine diphosphate biosynthesis; 4-methyl-5-(2-phosphoethyl)-thiazole from 5-(2-hydroxyethyl)-4-methylthiazole: step 1/1. In terms of biological role, catalyzes the phosphorylation of the hydroxyl group of 4-methyl-5-beta-hydroxyethylthiazole (THZ). This chain is Hydroxyethylthiazole kinase 1, found in Streptococcus pneumoniae serotype 4 (strain ATCC BAA-334 / TIGR4).